Consider the following 727-residue polypeptide: DNA replication licensing factor MCM5 (727 aa).

One can recognise an MCM domain in the interval 325 to 531 (VYKNICTKIA…SQDKEIASHI (207 aa)). 375 to 382 (GDPSTAKS) contributes to the ATP binding site. The Arginine finger motif lies at 507-510 (SRFD).

It belongs to the MCM family. As to quaternary structure, component of the minichromosome maintenance (MCM) complex, a heterotetramer composed of MCM2, MCM3, MCM4, MCM5, MCM6 and MCM7. Interacts with EGT1. In terms of tissue distribution, expressed in shoot apex and flower buds.

It localises to the nucleus. The protein resides in the cytoplasm. It carries out the reaction ATP + H2O = ADP + phosphate + H(+). Its function is as follows. Probable component of the MCM2-7 complex (MCM complex) that may function as a DNA helicase and which is essential to undergo a single round of replication initiation and elongation per cell cycle in eukaryotic cells. The sequence is that of DNA replication licensing factor MCM5 (MCM5) from Arabidopsis thaliana (Mouse-ear cress).